Consider the following 189-residue polypeptide: Elongation factor P (189 aa).

This sequence belongs to the elongation factor P family.

It localises to the cytoplasm. It functions in the pathway protein biosynthesis; polypeptide chain elongation. In terms of biological role, involved in peptide bond synthesis. Stimulates efficient translation and peptide-bond synthesis on native or reconstituted 70S ribosomes in vitro. Probably functions indirectly by altering the affinity of the ribosome for aminoacyl-tRNA, thus increasing their reactivity as acceptors for peptidyl transferase. In Orientia tsutsugamushi (strain Boryong) (Rickettsia tsutsugamushi), this protein is Elongation factor P.